A 251-amino-acid polypeptide reads, in one-letter code: Chloride intracellular channel protein 5 (251 aa).

Residues 1-98 (MTDSATTNGD…EEFLEETLTP (98 aa)) are required for insertion into the membrane. The G-site motif lies at 32-35 (CPFS). Residues 34 to 54 (FSQRLFMILWLKGVVFNVTTV) form a helical membrane-spanning segment. Residues 101–241 (YPKLAAKHRE…AADSEIELAY (141 aa)) form the GST C-terminal domain.

This sequence belongs to the chloride channel CLIC family. In terms of assembly, component of a multimeric complex consisting of several cytoskeletal proteins, including actin, ezrin, alpha-actinin, gelsolin, and IQGAP1. Interacts with AKAP9. Interacts with TPRN. TPRN, CLIC5 and PTPQR form concentric rings at the base of stereocilia and may form a complex. Interacts with EZR, MYO6 and RDX; the proteins may work together as a complex to stabilize linkages between the plasma membrane and subjacent actin cytoskeleton at the stereocilium base. As to expression, detected in lung and inner ear. Detected in embryonic cochlea, on microvilli-covered apical surfaces of interdental cells, columnar cells of Kolliker's organ, and on stereocilia of inner and outer hair cells (at protein level). Also detected in the eye, where it localizes to lens fiber cells in the lens epithelium (at protein level).

Its subcellular location is the golgi apparatus. The protein resides in the cytoplasm. It localises to the cytoskeleton. It is found in the microtubule organizing center. The protein localises to the centrosome. Its subcellular location is the cell cortex. The protein resides in the membrane. It localises to the apical cell membrane. It is found in the mitochondrion. The protein localises to the cell projection. Its subcellular location is the stereocilium. The catalysed reaction is Na(+)(in) = Na(+)(out). It carries out the reaction K(+)(in) = K(+)(out). It catalyses the reaction chloride(in) = chloride(out). Inhibited by F-actin. In the soluble state, catalyzes glutaredoxin-like thiol disulfide exchange reactions with reduced glutathione as electron donor. Can insert into membranes and form non-selective ion channels almost equally permeable to Na(+), K(+) and Cl(-). Required for normal hearing. Necessary for the formation of stereocilia in the inner ear and normal development of the organ of Corti. Required for the proper localization of PTPRQ and RDX to the stereocilium base during postnatal maturation of hair bundles. Can insert into membranes and form poorly selective ion channels that may also transport chloride ions. Required for the development and/or maintenance of the proper glomerular endothelial cell and podocyte architecture. Plays a role in formation of the lens suture in the eye, which is important for normal optical properties of the lens. The protein is Chloride intracellular channel protein 5 (Clic5) of Mus musculus (Mouse).